The primary structure comprises 154 residues: UPF0225 protein YpsIP31758_1970 (154 aa).

Belongs to the UPF0225 family.

The polypeptide is UPF0225 protein YpsIP31758_1970 (Yersinia pseudotuberculosis serotype O:1b (strain IP 31758)).